The following is a 249-amino-acid chain: uncharacterized protein (249 aa).

The chain crosses the membrane as a helical span at residues 3-23 (WYWIGLLIVVVLFLLSAVRIV).

This sequence belongs to the band 7/mec-2 family.

It is found in the membrane. This is an uncharacterized protein from Archaeoglobus fulgidus (strain ATCC 49558 / DSM 4304 / JCM 9628 / NBRC 100126 / VC-16).